The following is a 528-amino-acid chain: Phosphoenolpyruvate carboxykinase (ATP) (528 aa).

Substrate contacts are provided by Arg56, Tyr192, and Lys198. ATP contacts are provided by residues Lys198, His217, and 233–241 (GLSGTGKTT). Residues Lys198 and His217 each coordinate Mn(2+). Asp254 contacts Mn(2+). ATP is bound by residues Glu282, Arg319, and Thr444. Arg319 is a binding site for substrate.

This sequence belongs to the phosphoenolpyruvate carboxykinase (ATP) family. It depends on Mn(2+) as a cofactor.

It is found in the cytoplasm. It carries out the reaction oxaloacetate + ATP = phosphoenolpyruvate + ADP + CO2. It participates in carbohydrate biosynthesis; gluconeogenesis. Involved in the gluconeogenesis. Catalyzes the conversion of oxaloacetate (OAA) to phosphoenolpyruvate (PEP) through direct phosphoryl transfer between the nucleoside triphosphate and OAA. The chain is Phosphoenolpyruvate carboxykinase (ATP) from Bacillus cereus (strain AH187).